Consider the following 285-residue polypeptide: UPF0354 protein SACOL1793 (285 aa).

It belongs to the UPF0354 family.

The chain is UPF0354 protein SACOL1793 from Staphylococcus aureus (strain COL).